The sequence spans 195 residues: Flagellar transcriptional regulator FlhC (195 aa).

Cys-137, Cys-140, Cys-157, and Cys-160 together coordinate Zn(2+). Positions 165–195 (RAGSARRKTTTRKAVAPTHKTTAASRKAVVA) are disordered.

This sequence belongs to the FlhC family. As to quaternary structure, heterohexamer composed of two FlhC and four FlhD subunits. Each FlhC binds a FlhD dimer, forming a heterotrimer, and a hexamer assembles by dimerization of two heterotrimers. Zn(2+) is required as a cofactor.

Its subcellular location is the cytoplasm. Functions in complex with FlhD as a master transcriptional regulator that regulates transcription of several flagellar and non-flagellar operons by binding to their promoter region. Activates expression of class 2 flagellar genes, including fliA, which is a flagellum-specific sigma factor that turns on the class 3 genes. Also regulates genes whose products function in a variety of physiological pathways. The chain is Flagellar transcriptional regulator FlhC from Thauera aminoaromatica.